Here is a 701-residue protein sequence, read N- to C-terminus: Arachidonate 12-lipoxygenase, 12R-type (701 aa).

The PLAT domain maps to Ala-2 to Lys-119. The Lipoxygenase domain maps to Ile-120 to Ile-701. The Fe cation site is built by His-398, His-403, His-578, Asn-582, and Ile-701.

This sequence belongs to the lipoxygenase family. The cofactor is Fe cation. In terms of tissue distribution, expressed in skin epidermis and other stratified epithelia including tongue and forestomach. Low levels of expression are found in trachea, brain and lung. Not expressed in intestine, liver, kidney, adipose tissue, muscle or hematopoietic cells.

The protein resides in the cytoplasm. The protein localises to the perinuclear region. The enzyme catalyses 1-O-methyl-(5Z,8Z,11Z,14Z)-eicosatetraenoate + O2 = 1-O-methyl (5Z,8Z,10E,12R,14Z)-hydroperoxyiecosatetraenoate. It carries out the reaction 1-O-methyl-(5Z,8Z,11Z,14Z)-eicosatetraenoate + O2 = 1-O-methyl-8-hydroperoxy-(5Z,9E,11Z,14Z)-eicosatetraenoate. The catalysed reaction is (5Z,8Z,11Z,14Z)-eicosatetraenoate + O2 = (12R)-hydroperoxy-(5Z,8Z,10E,14Z)-eicosatetraenoate. It catalyses the reaction N-[omega-(9Z,12Z)-octadecadienoyloxy]acyl-beta-D-glucosyl-(1&lt;-&gt;1)-octadecasphing-4E-enine + O2 = N-[omega-(9R)-hydroperoxy-(10E,12Z)-octadecadienoyloxy]acyl-beta-D-glucosyl-(1&lt;-&gt;1)-octadecasphing-4E-enine. The enzyme catalyses a N-[omega-(9Z,12Z)-octadecadienoyloxy]-acylsphin-4E-enine + O2 = a N-[omega-(9R)-hydroperoxy-(10E,12Z)-octadecadienoyloxy]-acylsphin-4E-enine. It carries out the reaction (6Z,9Z,12Z)-octadecatrienoate + O2 = 10-hydroperoxy-(6Z,8E,12Z)-octadecatrienoate. The catalysed reaction is (4Z,7Z,10Z,13Z,16Z,19Z)-docosahexaenoate + O2 = 14-hydroperoxy-(4Z,7Z,10Z,12E,16Z,19Z)-docosahexaenoate. It catalyses the reaction (8Z,11Z,14Z)-eicosatrienoate + O2 = (8Z,10E,14Z)-12-hydroperoxyeicosatrienoate. The enzyme catalyses (5Z,8Z,11Z,14Z,17Z)-eicosapentaenoate + O2 = (5Z,7Z,8Z,10E,14Z,17Z)-12-hydroperoxyeicosapentaenoate. It carries out the reaction (6Z,9Z,12Z)-octadecatrienoate + O2 = 10R-hydroperoxy-(6Z,8E,12Z)-octadecatrienoate. The catalysed reaction is 1-O-methyl-(5Z,8Z,11Z,14Z)-eicosatetraenoate + O2 = 1-O-methyl-(8R)-hydroperoxy-(5Z,9E,11Z,14Z)-eicosatrienoate. It catalyses the reaction 1-O-methyl-(9Z,12Z)-octadecadienoate + O2 = 1-O-methyl-(9R)-hydroperoxy-(10E,12Z)-octadecadienoate. The enzyme catalyses 1-O-methyl-20-hydroxy-(5Z,8Z,11Z,14Z)-eicosatetraenoate + O2 = 1-O-methyl-8-hydroperoxy-20-hydroxy-(5Z,9E,11Z,14Z)-eicosatetraenoate. It carries out the reaction 1-O-methyl-20-hydroxy-(5Z,8Z,11Z,14Z)-eicosatetraenoate + O2 = 1-O-methyl-12-hydroperoxy-20-hydroxy-(5Z,8Z,10E,14Z)-eicosatetraenoate. The catalysed reaction is 1-O-methyl-20-hydroxy-(5Z,8Z,11Z,14Z)-eicosatetraenoate + O2 = 1-O-methyl-9-hydroperoxy-20-hydroxy-(5Z,7E,11Z,14Z)-eicosatetraenoate. It catalyses the reaction 1-O-methyl-(9Z,12Z)-octadecadienoate + O2 = 1-O-methyl-(13S)-hydroperoxy-(9Z,11E)-octadecadienoate. The protein operates within lipid metabolism; hydroperoxy eicosatetraenoic acid biosynthesis. Its pathway is lipid metabolism; sphingolipid metabolism. Increased by calcium. Catalyzes the regio and stereo-specific incorporation of a single molecule of dioxygen into free and esterified polyunsaturated fatty acids generating lipid hydroperoxides that can be further reduced to the corresponding hydroxy species. Does not convert arachidonic acid to (12R)-hydroperoxyeicosatetraenoic acid/(12R)-HPETE. In the skin, acts upstream of ALOXE3 on the lineolate moiety of esterified omega-hydroxyacyl-sphingosine (EOS) ceramides to produce an epoxy-ketone derivative, a crucial step in the conjugation of omega-hydroxyceramide to membrane proteins. Therefore plays a crucial role in the synthesis of corneocytes lipid envelope and the establishment of the skin barrier to water loss. May also play a role in the regulation of the expression of airway mucins. In Mus musculus (Mouse), this protein is Arachidonate 12-lipoxygenase, 12R-type.